A 407-amino-acid polypeptide reads, in one-letter code: CCCH-type zinc finger protein oma-1 (407 aa).

The segment at 1–39 is disordered; the sequence is MNVNGENNEKIDEHHLESSLAGVPTLPVSPLDHAKDLSQ. Residues 7 to 17 are compositionally biased toward basic and acidic residues; the sequence is NNEKIDEHHLE. Residues 46-80 are required for taf-4 binding; that stretch reads IGDLVTQTANLIAIKKQLLEDIAFNQHIQSMQVRA. 2 C3H1-type zinc fingers span residues 112–140 and 154–182; these read SYKT…HGEE and KYKT…HPDH. Thr239 carries the phosphothreonine; by mbk-2 and GSK3 modification. Ser302 is subject to Phosphoserine; by mbk-2. Residue Thr339 is modified to Phosphothreonine; by GSK3.

Interacts with taf-4 (via C-terminus). Interacts with ifet-1. Component of a ribonucleoprotein particle complex that interacts with cgh-1 and car-1 in an RNA-dependent manner. Association with many proteins is dependent on the presence of RNA. Phosphorylation by mbk-2 and by gsk-3 are required for its rapid degradation following meiosis II. In terms of tissue distribution, exclusively expressed in the hermaphrodite gonad. Expressed prior to oocyte division. Widely distributed throughout gonadal oocytes from the mitotic stage to the developing diakinesis stage. Expressed in sperm.

It localises to the cytoplasm. The protein resides in the cytoplasmic granule. It is found in the nucleus. Its function is as follows. Zinc-finger RNA-binding protein that binds to 5'-UA[AU]-3' motifs in the 3'-UTR of maternal mRNAs to suppress translation in oocytes and embryos. Acts as a ribonucleoprotein particle component that may exert part of its function within cytoplasmic foci of unfertilized oocytes. Acts redundantly with oma-2 to control the temporal expression and distribution of maternal proteins and thereby promote meiotic progression, oocyte maturation, fertilization and embryonic development. Recruits the translational repressor ifet-1 to the 3'-UTR of mei-1 and zif-1 to negatively regulate their translation. By suppressing the translation of the E3 ligase zif-1, may in turn play a role in the stabilization of zif-1 targets such as the maternal transcriptional repressor protein pie-1. Following fertilization, sequesters the transcription initiation factor, taf-4, in the cytoplasm, which prevents its nuclear localization and thus allows for transcriptional suppression in early embryos, but not in oocytes. Also, together with oma-2, is involved in P-granule distribution during embryonic development. This chain is CCCH-type zinc finger protein oma-1, found in Caenorhabditis elegans.